The chain runs to 133 residues: Small ribosomal subunit protein uS8 (133 aa).

The protein belongs to the universal ribosomal protein uS8 family. In terms of assembly, part of the 30S ribosomal subunit. Contacts proteins S5 and S12.

Functionally, one of the primary rRNA binding proteins, it binds directly to 16S rRNA central domain where it helps coordinate assembly of the platform of the 30S subunit. This chain is Small ribosomal subunit protein uS8, found in Acaryochloris marina (strain MBIC 11017).